The chain runs to 516 residues: Endo-acting ulvan lyase (516 aa).

Residues methionine 1–alanine 24 form the signal peptide. The cysteines at positions 38 and 65 are disulfide-linked. Ca(2+) contacts are provided by glycine 42, asparagine 44, aspartate 62, serine 64, alanine 67, and asparagine 68. Tyrosine 138 lines the substrate pocket. The Proton acceptor role is filled by lysine 143. Substrate contacts are provided by residues glutamate 191 to arginine 195 and tyrosine 260 to lysine 263. Catalysis depends on tyrosine 260, which acts as the Proton donor/acceptor. The interval proline 289–leucine 429 is ulvan-binding domain. Residues serine 430–lysine 516 constitute a propeptide, removed by the type IX secretion system (T9SS).

Belongs to the polysaccharide lyase 28 family. Requires Ca(2+) as cofactor.

It is found in the secreted. Its function is as follows. Ulvan lyase involved in ulvan degradation. Ulvan is the main polysaccharide component of the Ulvales (green seaweed) cell wall. It is composed of disaccharide building blocks comprising 3-sulfated rhamnose (Rha3S) linked to D-glucuronic acid (GlcA), L-iduronic acid (IduA), or D-xylose (Xyl). Ulvan lyase catalyzes the endolytic cleavage of the glycosidic bond between Rha3S and the uronic acids GlcA or IduA, producing oligosaccharides that have unsaturated 4-deoxy-L-threo-hex-4-enopyranosiduronic acid (deltaUA) at the non-reducing end. This results eventually in the degradation of the ulvan polysaccharide into deltaUA-Rha3S disaccharides and deltaUA-Rha3S-Xyl-Rha3S tetrasaccharides. The protein is Endo-acting ulvan lyase of Formosa agariphila (strain DSM 15362 / KCTC 12365 / LMG 23005 / KMM 3901 / M-2Alg 35-1).